The sequence spans 152 residues: 1,4-dihydroxy-2-naphthoyl-CoA hydrolase (152 aa).

The active site involves D20.

It belongs to the 4-hydroxybenzoyl-CoA thioesterase family. DHNA-CoA hydrolase subfamily.

It carries out the reaction 1,4-dihydroxy-2-naphthoyl-CoA + H2O = 1,4-dihydroxy-2-naphthoate + CoA + H(+). The protein operates within cofactor biosynthesis; phylloquinone biosynthesis. It functions in the pathway quinol/quinone metabolism; 1,4-dihydroxy-2-naphthoate biosynthesis; 1,4-dihydroxy-2-naphthoate from chorismate: step 7/7. Functionally, catalyzes the hydrolysis of 1,4-dihydroxy-2-naphthoyl-CoA (DHNA-CoA) to 1,4-dihydroxy-2-naphthoate (DHNA), a reaction involved in phylloquinone (vitamin K1) biosynthesis. This chain is 1,4-dihydroxy-2-naphthoyl-CoA hydrolase, found in Synechococcus sp. (strain CC9311).